A 547-amino-acid chain; its full sequence is Rho GTPase-activating protein 36 (547 aa).

The first 40 residues, 1–40 (MGGCNPFLKAARTLCPRIMPPLLFLSAFIFLVNVLGGAPG), serve as a signal peptide directing secretion. The region spanning 226–426 (MSLNPIAKQI…AMIDNWDILF (201 aa)) is the Rho-GAP domain. The segment at 493–547 (FDEGSSEEPAVPPGTAHSHDDEEGAGNPPIPEQDRPLLRVPREKQAKTGIGYFFP) is disordered. Positions 524-538 (EQDRPLLRVPREKQA) are enriched in basic and acidic residues.

Its function is as follows. GTPase activator for the Rho-type GTPases by converting them to an inactive GDP-bound state. The sequence is that of Rho GTPase-activating protein 36 (ARHGAP36) from Ailuropoda melanoleuca (Giant panda).